We begin with the raw amino-acid sequence, 260 residues long: Putative ABC transporter ATP-binding protein SCO3161 (260 aa).

The ABC transporter domain occupies 16–246 (LDVSGLAFAY…DDLMRAHRLE (231 aa)). 49 to 56 (GPNGAGKT) is a binding site for ATP.

It belongs to the ABC transporter superfamily.

Its subcellular location is the cell membrane. Functionally, probably part of an ABC transporter complex. Responsible for energy coupling to the transport system. This chain is Putative ABC transporter ATP-binding protein SCO3161, found in Streptomyces coelicolor (strain ATCC BAA-471 / A3(2) / M145).